The primary structure comprises 126 residues: UPF0102 protein Mlg_2205 (126 aa).

The protein belongs to the UPF0102 family.

The chain is UPF0102 protein Mlg_2205 from Alkalilimnicola ehrlichii (strain ATCC BAA-1101 / DSM 17681 / MLHE-1).